The sequence spans 415 residues: MNSLPESGSDGQSSADPSQKATSLPRYGRVIWILAGEASGDVIGARLMQALHAQDPSLVFAGVGGGRMEALGLHSLFPMSDLAVMGLVEVVPRLRQLSQRLLEAVQDIELRKPDLVVTIDSPGFTLRLLQKIERSGIKRVHYVAPQVWAWRENRVKEFPGLWDRLLCLLPFEPDWFAQRGLEGRFVGHPVLQSGVRQGNAQRFRLRHNIPAHAPVVILMPGSRRSEAPRLLPVFRKMLDILRVQYPDICPVIPVAPVIAPTIRQLIRKWPIQPHIVTDIHDKHDAFAAAQCALTKSGTSTLELAMGNVPMAVTYRVNPVTATIARRLIKVPHVAMVNLLAGREVVPELLQENCTPKKLAETVSKLLSDPQMVEKQRMAFADVLDKLSPPVGTPADAAAAEIMDLLNEPVSRSSRS.

The interval 1–21 is disordered; it reads MNSLPESGSDGQSSADPSQKA.

The protein belongs to the LpxB family.

The catalysed reaction is a lipid X + a UDP-2-N,3-O-bis[(3R)-3-hydroxyacyl]-alpha-D-glucosamine = a lipid A disaccharide + UDP + H(+). Its pathway is bacterial outer membrane biogenesis; LPS lipid A biosynthesis. Functionally, condensation of UDP-2,3-diacylglucosamine and 2,3-diacylglucosamine-1-phosphate to form lipid A disaccharide, a precursor of lipid A, a phosphorylated glycolipid that anchors the lipopolysaccharide to the outer membrane of the cell. This is Lipid-A-disaccharide synthase from Gluconobacter oxydans (strain 621H) (Gluconobacter suboxydans).